The following is a 555-amino-acid chain: Formate--tetrahydrofolate ligase (555 aa).

Residue 65–72 (TPAGEGKS) coordinates ATP.

It belongs to the formate--tetrahydrofolate ligase family.

It carries out the reaction (6S)-5,6,7,8-tetrahydrofolate + formate + ATP = (6R)-10-formyltetrahydrofolate + ADP + phosphate. It functions in the pathway one-carbon metabolism; tetrahydrofolate interconversion. The protein is Formate--tetrahydrofolate ligase of Staphylococcus aureus (strain bovine RF122 / ET3-1).